The sequence spans 631 residues: Phosphomethylpyrimidine synthase (631 aa).

Substrate contacts are provided by residues Asn239, Met268, Tyr297, His333, 353 to 355, 394 to 397, and Glu433; these read SRG and DGLR. Residue His437 participates in Zn(2+) binding. Tyr460 lines the substrate pocket. A Zn(2+)-binding site is contributed by His501. Positions 581, 584, and 589 each coordinate [4Fe-4S] cluster.

It belongs to the ThiC family. As to quaternary structure, homodimer. The cofactor is [4Fe-4S] cluster.

It carries out the reaction 5-amino-1-(5-phospho-beta-D-ribosyl)imidazole + S-adenosyl-L-methionine = 4-amino-2-methyl-5-(phosphooxymethyl)pyrimidine + CO + 5'-deoxyadenosine + formate + L-methionine + 3 H(+). The protein operates within cofactor biosynthesis; thiamine diphosphate biosynthesis. Catalyzes the synthesis of the hydroxymethylpyrimidine phosphate (HMP-P) moiety of thiamine from aminoimidazole ribotide (AIR) in a radical S-adenosyl-L-methionine (SAM)-dependent reaction. The protein is Phosphomethylpyrimidine synthase of Salmonella arizonae (strain ATCC BAA-731 / CDC346-86 / RSK2980).